Here is a 171-residue protein sequence, read N- to C-terminus: S-ribosylhomocysteine lyase (171 aa).

3 residues coordinate Fe cation: histidine 54, histidine 58, and cysteine 128.

It belongs to the LuxS family. Homodimer. Requires Fe cation as cofactor.

It carries out the reaction S-(5-deoxy-D-ribos-5-yl)-L-homocysteine = (S)-4,5-dihydroxypentane-2,3-dione + L-homocysteine. Involved in the synthesis of autoinducer 2 (AI-2) which is secreted by bacteria and is used to communicate both the cell density and the metabolic potential of the environment. The regulation of gene expression in response to changes in cell density is called quorum sensing. Catalyzes the transformation of S-ribosylhomocysteine (RHC) to homocysteine (HC) and 4,5-dihydroxy-2,3-pentadione (DPD). The protein is S-ribosylhomocysteine lyase of Enterobacter sp. (strain 638).